Here is a 337-residue protein sequence, read N- to C-terminus: Cytidine deaminase 2 (337 aa).

CMP/dCMP-type deaminase domains lie at T43–L164 and L199–L320. N84–D86 lines the substrate pocket. H97 contributes to the Zn(2+) binding site. The Proton donor role is filled by E99. Residues C132 and C135 each coordinate Zn(2+).

It belongs to the cytidine and deoxycytidylate deaminase family. In terms of assembly, homodimer. Requires Zn(2+) as cofactor.

The catalysed reaction is cytidine + H2O + H(+) = uridine + NH4(+). It catalyses the reaction 2'-deoxycytidine + H2O + H(+) = 2'-deoxyuridine + NH4(+). In terms of biological role, this enzyme scavenges exogenous and endogenous cytidine and 2'-deoxycytidine for UMP synthesis. The sequence is that of Cytidine deaminase 2 (CDA2) from Arabidopsis thaliana (Mouse-ear cress).